The primary structure comprises 411 residues: Basic leucine zipper 10 (411 aa).

Disordered stretches follow at residues 1-36 (MNSI…DEVS), 76-99 (SLPS…DSGN), 140-251 (SVKP…NDLK), and 362-411 (NNFA…KCVD). Residues 24-36 (PDSSKPVTADEVS) show a composition bias toward polar residues. The segment covering 89-98 (DSRFRDRDSG) has biased composition (basic and acidic residues). Composition is skewed to polar residues over residues 146 to 173 (STSS…TSSL) and 183 to 193 (SMKQVTSGSSR). At S196 the chain carries Phosphoserine. Over residues 196–206 (SDDEDLDEENE) the composition is skewed to acidic residues. In terms of domain architecture, bZIP spans 215–278 (DVKKSRRMLS…DEAAVGNRIL (64 aa)). The basic motif stretch occupies residues 217 to 236 (KKSRRMLSNRESARRSRRRK). The Nuclear localization signal motif lies at 219-226 (SRRMLSNR). The segment at 243 to 257 (LETQVNDLKGEHSSL) is leucine-zipper. The span at 368 to 390 (PSQTSSPLQRIRNGQNHHVTPSA) shows a compositional bias: polar residues.

This sequence belongs to the bZIP family. As to quaternary structure, forms a heterodimer with BZIP1, BZIP2, BZIP9, BZIP11, BZIP44, BZIP53 and BZIP63. Interacts with ABI3 and forms a complex made of ABI3, BZIP53 and BZIP10. Binding with LSD1 leads to cytoplasmic retention. Expressed in roots, shoots, stems, young leaves, trichomes, hydathodes, siliques, seeds, and flowers, mostly in vascular tissues.

Its subcellular location is the nucleus. The protein localises to the cytoplasm. In terms of biological role, transcription factor that binds to the C-box-like motif (5'-TGCTGACGTCA-3') and G-box-like motif (5'-CCACGTGGCC-3'), ABRE elements, of gene promoters. Binds to the 5'-ACGT-3' motif of seed storage protein (SSP) encoding gene promoters (e.g. At2S and CRU3) and promotes their expression in seeds when in complex with ABI3 and BZIP53. Involved in the defense responses to the biotrophic pathogen Hyaloperonospora parasitica and oxidative stress responses; mediates positively cell death. Promotes BZIP53-mediated response to hypoosmolarity stress that leads to POX1/PRODH1 accumulation. This is Basic leucine zipper 10 (BZIP10) from Arabidopsis thaliana (Mouse-ear cress).